A 419-amino-acid polypeptide reads, in one-letter code: GTPase Obg (419 aa).

An Obg domain is found at 1–156; sequence MFIDKVNTYL…AEVNLELRLI (156 aa). Residues 157 to 325 enclose the OBG-type G domain; it reads ADVGLLGLPN…LLKEMLRMLE (169 aa). Residues 163 to 170, 188 to 192, 209 to 212, 279 to 282, and 306 to 308 contribute to the GTP site; these read GLPNAGKS, FTTLA, DIPG, NKID, and SAA. S170 and T190 together coordinate Mg(2+). The OCT domain maps to 342 to 419; it reads KKYIYEPEFK…IGDFEFTFEK (78 aa).

It belongs to the TRAFAC class OBG-HflX-like GTPase superfamily. OBG GTPase family. Monomer. Requires Mg(2+) as cofactor.

Its subcellular location is the cytoplasm. Its function is as follows. An essential GTPase which binds GTP, GDP and possibly (p)ppGpp with moderate affinity, with high nucleotide exchange rates and a fairly low GTP hydrolysis rate. Plays a role in control of the cell cycle, stress response, ribosome biogenesis and in those bacteria that undergo differentiation, in morphogenesis control. The polypeptide is GTPase Obg (Endomicrobium trichonymphae).